The primary structure comprises 115 residues: NADH-ubiquinone oxidoreductase chain 3 (115 aa).

The next 3 membrane-spanning stretches (helical) occupy residues 3 to 23 (FVLA…ITFW), 55 to 75 (FFLV…LLPL), and 84 to 104 (LPLM…GLTY).

The protein belongs to the complex I subunit 3 family. As to quaternary structure, core subunit of respiratory chain NADH dehydrogenase (Complex I) which is composed of 45 different subunits. Interacts with TMEM186. Interacts with TMEM242.

It localises to the mitochondrion inner membrane. The catalysed reaction is a ubiquinone + NADH + 5 H(+)(in) = a ubiquinol + NAD(+) + 4 H(+)(out). Its function is as follows. Core subunit of the mitochondrial membrane respiratory chain NADH dehydrogenase (Complex I) which catalyzes electron transfer from NADH through the respiratory chain, using ubiquinone as an electron acceptor. Essential for the catalytic activity of complex I. The polypeptide is NADH-ubiquinone oxidoreductase chain 3 (Pongo abelii (Sumatran orangutan)).